Consider the following 312-residue polypeptide: Malate dehydrogenase (312 aa).

Residues 12–17 (GAGFTG) and aspartate 36 contribute to the NAD(+) site. Arginine 87 and arginine 93 together coordinate substrate. NAD(+) is bound by residues asparagine 100 and 123–125 (LTN). Asparagine 125 serves as a coordination point for substrate. Serine 149 bears the Phosphoserine mark. Substrate is bound at residue arginine 156. Histidine 180 (proton acceptor) is an active-site residue.

The protein belongs to the LDH/MDH superfamily. MDH type 3 family.

It carries out the reaction (S)-malate + NAD(+) = oxaloacetate + NADH + H(+). Functionally, catalyzes the reversible oxidation of malate to oxaloacetate. This Bacillus cytotoxicus (strain DSM 22905 / CIP 110041 / 391-98 / NVH 391-98) protein is Malate dehydrogenase.